The sequence spans 159 residues: NADH-quinone oxidoreductase subunit B (159 aa).

[4Fe-4S] cluster-binding residues include Cys32, Cys33, Cys97, and Cys126.

The protein belongs to the complex I 20 kDa subunit family. In terms of assembly, NDH-1 is composed of 14 different subunits. Subunits NuoB, C, D, E, F, and G constitute the peripheral sector of the complex. [4Fe-4S] cluster is required as a cofactor.

The protein localises to the cell inner membrane. It carries out the reaction a quinone + NADH + 5 H(+)(in) = a quinol + NAD(+) + 4 H(+)(out). In terms of biological role, NDH-1 shuttles electrons from NADH, via FMN and iron-sulfur (Fe-S) centers, to quinones in the respiratory chain. The immediate electron acceptor for the enzyme in this species is believed to be ubiquinone. Couples the redox reaction to proton translocation (for every two electrons transferred, four hydrogen ions are translocated across the cytoplasmic membrane), and thus conserves the redox energy in a proton gradient. In Helicobacter acinonychis (strain Sheeba), this protein is NADH-quinone oxidoreductase subunit B.